The primary structure comprises 194 residues: Large ribosomal subunit protein bL9 (194 aa).

The segment at 165–194 is disordered; sequence PEDAEEAVANEEEAEAALLDDEDADEYEQG. Residues 166–194 are compositionally biased toward acidic residues; it reads EDAEEAVANEEEAEAALLDDEDADEYEQG.

Belongs to the bacterial ribosomal protein bL9 family.

Functionally, binds to the 23S rRNA. The sequence is that of Large ribosomal subunit protein bL9 from Rhodospirillum rubrum (strain ATCC 11170 / ATH 1.1.1 / DSM 467 / LMG 4362 / NCIMB 8255 / S1).